Reading from the N-terminus, the 232-residue chain is Large ribosomal subunit protein uL1 (232 aa).

This sequence belongs to the universal ribosomal protein uL1 family. In terms of assembly, part of the 50S ribosomal subunit.

Functionally, binds directly to 23S rRNA. The L1 stalk is quite mobile in the ribosome, and is involved in E site tRNA release. In terms of biological role, protein L1 is also a translational repressor protein, it controls the translation of the L11 operon by binding to its mRNA. The polypeptide is Large ribosomal subunit protein uL1 (Paraburkholderia phymatum (strain DSM 17167 / CIP 108236 / LMG 21445 / STM815) (Burkholderia phymatum)).